Here is a 1191-residue protein sequence, read N- to C-terminus: Zinc finger protein ush (1191 aa).

Disordered stretches follow at residues 1–153 (MLSS…PKYP) and 169–194 (PDAK…DTQA). Residues 19–28 (VDSRDSKDLS) show a composition bias toward basic and acidic residues. A compositionally biased stretch (acidic residues) spans 61 to 73 (IDDDADEDAEFEE). Phosphoserine occurs at positions 116 and 118. Residues 130–151 (ATPPSEPEASPCPSPSPCPTPK) show a composition bias toward pro residues. Residues 202-235 (LLKPARFMCLPCGIAFSSPSTLEAHQAYYCSHRI) form a CCHC FOG-type 1 zinc finger. Residues Cys-210, Cys-213, His-226, and Cys-231 each coordinate Zn(2+). The tract at residues 239–274 (DEAGSDKSGAGGSGATAGDAAGLTGGSTEPPAKMAR) is disordered. A compositionally biased stretch (low complexity) spans 254–266 (TAGDAAGLTGGST). The segment at 279-301 (YGCTQCSYSADKKVSLNRHMRMH) adopts a C2H2-type 1 zinc-finger fold. The segment at 304-338 (SPAAPTLAGLPSLLQNGIAPPGVTPNPMEDSSSQQ) is disordered. The CCHC FOG-type 2 zinc finger occupies 335 to 368 (SSQQTDRYCSHCDIRFNNIKTYRAHKQHYCSSRR). Residues Cys-343, Cys-346, His-359, and Cys-364 each contribute to the Zn(2+) site. Disordered regions lie at residues 361–413 (QHYC…ARNK), 504–540 (EPER…ESAP), and 601–635 (APSL…MSPP). Over residues 383–394 (AGSGPGSAGGSI) the composition is skewed to gly residues. 3 stretches are compositionally biased toward low complexity: residues 509 to 523 (SAPS…AKSS), 602 to 613 (PSLPSSPSMSPS), and 620 to 635 (SPRS…MSPP). 2 consecutive CCHC FOG-type zinc fingers follow at residues 720–753 (YVKK…SARS) and 791–824 (PVAY…PKGG). Zn(2+) is bound by residues Cys-728, Cys-731, His-744, Cys-749, Cys-799, Cys-802, His-815, and Cys-820. 3 consecutive C2H2-type zinc fingers follow at residues 882–907 (NKCP…HGTV), 910–932 (YRCS…IRTH), and 983–1006 (FNCD…KLMH). A disordered region spans residues 1011 to 1073 (INSPSISPDT…HENNNSPIAT (63 aa)). Ser-1013, Ser-1015, and Ser-1017 each carry phosphoserine. Positions 1025–1040 (VTSNPTTNQHSNSDVS) are enriched in polar residues. The CCHC FOG-type 5 zinc-finger motif lies at 1113-1146 (AAEVMKKYCSTCDISFNYVKTYLAHKQFYCKNKP). Residues Cys-1121, Cys-1124, His-1137, and Cys-1142 each contribute to the Zn(2+) site. At Ser-1156 the chain carries Phosphoserine.

It belongs to the FOG (Friend of GATA) family. Interacts with pnr, although weak this interaction is essential. Interacts with the isoform SrpNC of srp. Interacts with CtBP corepressor. First expressed in stage 5 at high levels in the primordium of the amnioserosa. Also expressed in germ band extending embryos in cells of the developing anterior and posterior midgut and in hemocyte precursors present in the cephalic mesoderm. In embryonic stage 8, it is expressed in blood cell precursors. By stage 10, it is expressed in hemocyte precursors that have spread throughout the lateral and ventral head mesoderm. By stage 11, it is expressed in the dorsal ectoderm and in precursor cells of the hemocytes and fat body. As embryogenesis proceeds, it is also expressed in stage 13 plasmatocytes migrating throughout the head mesoderm and down the ventral midline. By late embryogenesis, expression strongly decreases but remains in the dorsal ectoderm during dorsal closure, in cells within, or associated with, the central nervous system, and in plasmatocytes circulating throughout the embryonic hemolymph. During larval development, it is expressed in primary and secondary lobes of lymph glands. Expressed in the dorsal part of the thoracic imaginal disk.

It is found in the nucleus. Its function is as follows. Transcription regulator that modulates expression mediated by transcription factors of the GATA family such as pnr and srp. Represses transcription of proneural achaete-scute complex (AS-C), which is usually activated by pnr. Involved in cardiogenesis, blood, and eye development. During hematopoiesis, it is required to restrict the number of crystal cells, probably via its interaction with the isoform SrpNC of srp. Negatively regulates expression of sr. Probably acts by interacting with the GATA-type zinc finger of proteins such as pnr and srp, possibly antagonizing the interaction between the GATA-type zinc finger and some cofactor. In Drosophila melanogaster (Fruit fly), this protein is Zinc finger protein ush (ush).